The primary structure comprises 889 residues: Envelope glycoprotein gp160 (889 aa).

The signal sequence occupies residues 1–22 (MGCLGNQLLIALLLLSASGIYC). Residues 23–704 (VQYVTVFYGI…TSWIKYIQYG (682 aa)) are Extracellular-facing. N-linked (GlcNAc...) asparagine; by host glycosylation occurs at Asn37. Cys44 and Cys57 form a disulfide bridge. 2 N-linked (GlcNAc...) asparagine; by host glycosylation sites follow: Asn70 and Asn114. 5 cysteine pairs are disulfide-bonded: Cys101/Cys226, Cys108/Cys217, Cys113/Cys175, Cys239/Cys269, and Cys249/Cys261. The V1 stretch occupies residues 113 to 174 (CNKSETDRWG…TGLEQEPMVS (62 aa)). A disordered region spans residues 120-145 (RWGLTGTPAPTTTQTTTTQASTTPTS). A compositionally biased stretch (low complexity) spans 126–145 (TPAPTTTQTTTTQASTTPTS). N-linked (GlcNAc...) asparagine; by host glycosylation is found at Asn153, Asn163, Asn178, Asn191, Asn206, Asn218, Asn250, Asn253, Asn260, Asn284, Asn290, Asn301, Asn312, Asn322, Asn377, Asn422, Asn470, Asn486, and Asn489. Positions 175-217 (CKFNMTGLKRDKKREYNETWYSRDLVCEQNSNETDSKCYMNHC) are V2. The V3 stretch occupies residues 317 to 349 (CRRPGNKTVLPVTIMSGLVFHSQPINERPKQAW). Cys317 and Cys350 are joined by a disulfide. Intrachain disulfides connect Cys401-Cys469 and Cys408-Cys442. The interval 408–442 (CKMNWFLNWVENIQNGSRWTSQNQKERQRRNYVPC) is V4. The interval 485-492 (GNETNITM) is V5. Residues 536 to 556 (GVFVLGFLGFLATAGSAMSAA) form a fusion peptide region. Positions 599-615 (LQTRVTAIEKYLKDQAQ) are immunosuppression. Asn635, Asn644, and Asn660 each carry an N-linked (GlcNAc...) asparagine; by host glycan. Residues 648-675 (QEWEKQVNFLEANITQSLEEAQIQQEKN) adopt a coiled-coil conformation. The interval 681-702 (KLNSWDIFGNWFDLTSWIKYIQ) is MPER; binding to GalCer. Residues 705-725 (VLIVLGVIGLRIVIYVVQMLA) traverse the membrane as a helical segment. The Cytoplasmic portion of the chain corresponds to 726–889 (RLRQGYRPVF…IRQGLELTLL (164 aa)). The YXXV motif; contains endocytosis signal motif lies at 731 to 734 (YRPV). Residue Cys797 is the site of S-palmitoyl cysteine; by host attachment. Residues 888–889 (LL) carry the Di-leucine internalization motif motif.

In terms of assembly, the mature envelope protein (Env) consists of a homotrimer of non-covalently associated gp120-gp41 heterodimers. The resulting complex protrudes from the virus surface as a spike. Interacts with host CD4 and CCR5. Gp120 also interacts with the C-type lectins CD209/DC-SIGN and CLEC4M/DC-SIGNR (collectively referred to as DC-SIGN(R)). As to quaternary structure, the mature envelope protein (Env) consists of a homotrimer of non-covalently associated gp120-gp41 heterodimers. The resulting complex protrudes from the virus surface as a spike. In terms of processing, specific enzymatic cleavages in vivo yield mature proteins. Envelope glycoproteins are synthesized as an inactive precursor that is heavily N-glycosylated and processed likely by host cell furin in the Golgi to yield the mature SU and TM proteins. The cleavage site between SU and TM requires the minimal sequence [KR]-X-[KR]-R. Palmitoylation of the transmembrane protein and of Env polyprotein (prior to its proteolytic cleavage) is essential for their association with host cell membrane lipid rafts. Palmitoylation is therefore required for envelope trafficking to classical lipid rafts, but not for viral replication.

It localises to the virion membrane. It is found in the host cell membrane. Its subcellular location is the host endosome membrane. Functionally, the surface protein gp120 (SU) attaches the virus to the host lymphoid cell by binding to the primary receptor CD4. This interaction induces a structural rearrangement creating a high affinity binding site for a chemokine coreceptor like CCR5. This peculiar 2 stage receptor-interaction strategy allows gp120 to maintain the highly conserved coreceptor-binding site in a cryptic conformation, protected from neutralizing antibodies. These changes are transmitted to the transmembrane protein gp41 and are thought to activate its fusogenic potential by unmasking its fusion peptide. Its function is as follows. Surface protein gp120 (SU) may target the virus to gut-associated lymphoid tissue (GALT) by binding host ITGA4/ITGB7 (alpha-4/beta-7 integrins), a complex that mediates T-cell migration to the GALT. Interaction between gp120 and ITGA4/ITGB7 would allow the virus to enter GALT early in the infection, infecting and killing most of GALT's resting CD4+ T-cells. This T-cell depletion is believed to be the major insult to the host immune system leading to AIDS. In terms of biological role, the surface protein gp120 is a ligand for CD209/DC-SIGN and CLEC4M/DC-SIGNR, which are respectively found on dendritic cells (DCs), and on endothelial cells of liver sinusoids and lymph node sinuses. These interactions allow capture of viral particles at mucosal surfaces by these cells and subsequent transmission to permissive cells. DCs are professional antigen presenting cells, critical for host immunity by inducing specific immune responses against a broad variety of pathogens. They act as sentinels in various tissues where they take up antigen, process it, and present it to T-cells following migration to lymphoid organs. SIV subverts the migration properties of dendritic cells to gain access to CD4+ T-cells in lymph nodes. Virus transmission to permissive T-cells occurs either in trans (without DCs infection, through viral capture and transmission), or in cis (following DCs productive infection, through the usual CD4-gp120 interaction), thereby inducing a robust infection. In trans infection, bound virions remain infectious over days and it is proposed that they are not degraded, but protected in non-lysosomal acidic organelles within the DCs close to the cell membrane thus contributing to the viral infectious potential during DCs' migration from the periphery to the lymphoid tissues. On arrival at lymphoid tissues, intact virions recycle back to DCs' cell surface allowing virus transmission to CD4+ T-cells. Virion capture also seems to lead to MHC-II-restricted viral antigen presentation, and probably to the activation of SIV-specific CD4+ cells. The transmembrane protein gp41 (TM) acts as a class I viral fusion protein. Under the current model, the protein has at least 3 conformational states: pre-fusion native state, pre-hairpin intermediate state, and post-fusion hairpin state. During fusion of viral and target intracellular membranes, the coiled coil regions (heptad repeats) assume a trimer-of-hairpins structure, positioning the fusion peptide in close proximity to the C-terminal region of the ectodomain. The formation of this structure appears to drive apposition and subsequent fusion of viral and target cell membranes. Complete fusion occurs in host cell endosomes. The virus undergoes clathrin-dependent internalization long before endosomal fusion, thus minimizing the surface exposure of conserved viral epitopes during fusion and reducing the efficacy of inhibitors targeting these epitopes. Membranes fusion leads to delivery of the nucleocapsid into the cytoplasm. Functionally, the envelope glycoprotein gp160 precursor down-modulates cell surface CD4 antigen by interacting with it in the endoplasmic reticulum and blocking its transport to the cell surface. Its function is as follows. The gp120-gp41 heterodimer allows rapid transcytosis of the virus through CD4 negative cells such as simple epithelial monolayers of the intestinal, rectal and endocervical epithelial barriers. Both gp120 and gp41 specifically recognize glycosphingolipids galactosyl-ceramide (GalCer) or 3' sulfo-galactosyl-ceramide (GalS) present in the lipid rafts structures of epithelial cells. Binding to these alternative receptors allows the rapid transcytosis of the virus through the epithelial cells. This transcytotic vesicle-mediated transport of virions from the apical side to the basolateral side of the epithelial cells does not involve infection of the cells themselves. The protein is Envelope glycoprotein gp160 (env) of Simian immunodeficiency virus (isolate PBj14/BCL-3) (SIV-sm).